The following is a 213-amino-acid chain: MEIKVDEGHQKGTKEDITRPLLEEDKDFPDIERTTWIQKAIGQTFQTTAHLANLLPTGTVLAFQLLSPIFSNGGQCDLVSKIMTSTLVAICGFSCFILSFTDSYKDKNGTICYGLATIHGFWIIDGSTTLPQELSKRYKLRFIDFVHAFMSLFVFGAVVLFDRNAVNCFFPSPSAEALEVLTALPVGVGVFSSMLFATFPTTRNGIGFPLSSK.

A run of 4 helical transmembrane segments spans residues 51-71, 78-98, 142-162, and 180-200; these read LANL…PIFS, LVSK…CFIL, FIDF…VLFD, and VLTA…ATFP.

The protein belongs to the plant DMP1 protein family. As to expression, expressed in leaves, flowers and siliques, especially in vascular tissues.

Its subcellular location is the vacuole membrane. Its function is as follows. Involved in membrane remodeling. The protein is Protein DMP4 of Arabidopsis thaliana (Mouse-ear cress).